A 382-amino-acid polypeptide reads, in one-letter code: MDQQKVNLLNYNYLQLRELLMAWDEKPFRAQQLFQWIHQVGIRDFAQMTNLGKVLRNKLSQLACIDLPEIVACQKSADGTHKWLLKLECGNCIETVFIPEANRGTLCVSSQVGCALNCSFCSTAKQGFNRNLSTAEIIGQVWLAARELSDNDGTHDKKITNVVMMGMGEPLLNFDNVVSAMNIMMDDLAYGLSKRRVTLSTSGVIPEMERLREVSPVALAVSLHAPTDELRNELVPINKKYPLSQLISLCKRYFKDEPRRKVTFEYVMLKGVNDQPEHASQLIKLLHNVPAKVNLIPFNPFPLTQYQRSSRETIDAFRDKLMKHGINTITRKTRGDDIDAACGQLAGEVKDKTSRSQRWQKLHFMSKTDKSTELTISSEEIA.

The Proton acceptor role is filled by Glu94. The region spanning 100 to 336 (EANRGTLCVS…NTITRKTRGD (237 aa)) is the Radical SAM core domain. The cysteines at positions 107 and 342 are disulfide-linked. Residues Cys114, Cys118, and Cys121 each contribute to the [4Fe-4S] cluster site. Residues 168–169 (GE), Ser200, 222–224 (SLH), and Asn299 contribute to the S-adenosyl-L-methionine site. Cys342 acts as the S-methylcysteine intermediate in catalysis.

It belongs to the radical SAM superfamily. RlmN family. [4Fe-4S] cluster is required as a cofactor.

It localises to the cytoplasm. The catalysed reaction is adenosine(2503) in 23S rRNA + 2 reduced [2Fe-2S]-[ferredoxin] + 2 S-adenosyl-L-methionine = 2-methyladenosine(2503) in 23S rRNA + 5'-deoxyadenosine + L-methionine + 2 oxidized [2Fe-2S]-[ferredoxin] + S-adenosyl-L-homocysteine. It carries out the reaction adenosine(37) in tRNA + 2 reduced [2Fe-2S]-[ferredoxin] + 2 S-adenosyl-L-methionine = 2-methyladenosine(37) in tRNA + 5'-deoxyadenosine + L-methionine + 2 oxidized [2Fe-2S]-[ferredoxin] + S-adenosyl-L-homocysteine. Functionally, specifically methylates position 2 of adenine 2503 in 23S rRNA and position 2 of adenine 37 in tRNAs. m2A2503 modification seems to play a crucial role in the proofreading step occurring at the peptidyl transferase center and thus would serve to optimize ribosomal fidelity. In Legionella pneumophila (strain Lens), this protein is Dual-specificity RNA methyltransferase RlmN.